Here is a 219-residue protein sequence, read N- to C-terminus: ATP-dependent Clp protease proteolytic subunit 4 (219 aa).

Residue S125 is the Nucleophile of the active site. The active site involves H150.

It belongs to the peptidase S14 family. Fourteen ClpP subunits assemble into 2 heptameric rings which stack back to back to give a disk-like structure with a central cavity, resembling the structure of eukaryotic proteasomes.

It localises to the cytoplasm. The catalysed reaction is Hydrolysis of proteins to small peptides in the presence of ATP and magnesium. alpha-casein is the usual test substrate. In the absence of ATP, only oligopeptides shorter than five residues are hydrolyzed (such as succinyl-Leu-Tyr-|-NHMec, and Leu-Tyr-Leu-|-Tyr-Trp, in which cleavage of the -Tyr-|-Leu- and -Tyr-|-Trp bonds also occurs).. Cleaves peptides in various proteins in a process that requires ATP hydrolysis. Has a chymotrypsin-like activity. Plays a major role in the degradation of misfolded proteins. The polypeptide is ATP-dependent Clp protease proteolytic subunit 4 (Prochlorococcus marinus (strain MIT 9312)).